The primary structure comprises 843 residues: Alpha-L-fucosidase 2 (843 aa).

Residues 1-27 (MAEKSSFFVHFSCLLLLLTIIITCGEG) form the signal peptide. Residues N62, N253, N365, and N605 are each glycosylated (N-linked (GlcNAc...) asparagine).

It belongs to the glycosyl hydrolase 95 family. In terms of tissue distribution, ubiquitous. Highest expression in vascular tissues, leaf trichomes, root elongation zone and emerging lateral roots.

The protein resides in the secreted. The protein localises to the extracellular space. Its subcellular location is the apoplast. It catalyses the reaction an alpha-L-fucoside + H2O = L-fucose + an alcohol. Its function is as follows. Hydrolyzes alpha-1,2-linked fucose. Also active on fucosylated xyloglucan oligosaccharides. No activity with 3-fucosyllactose, p-nitrophenyl-alpha-I-fucopyranoside, lacto-N-fucopentaose II, lacto-N-fucopentaose III or alpha 1,6-fucosylated chitopentaose. Involved in apoplastic xyloglucan metabolism. In Arabidopsis thaliana (Mouse-ear cress), this protein is Alpha-L-fucosidase 2 (FUC95A).